A 1309-amino-acid polypeptide reads, in one-letter code: Clustered mitochondria protein homolog (1309 aa).

The disordered stretch occupies residues 1 to 34 (MLLNGDCPESLKKEAAAAEPPRENGLDEAGPGDE). A compositionally biased stretch (basic and acidic residues) spans 9–25 (ESLKKEAAAAEPPRENG). Residues Ser279 and Ser281 each carry the phosphoserine modification. The region spanning 335-577 (RAEDAYTSRL…RTFPPDLNFL (243 aa)) is the Clu domain. Positions 636–651 (LETPSSLENGGPSSLE) are enriched in polar residues. The tract at residues 636–674 (LETPSSLENGGPSSLESKSEDPPGQEAGSEEEGSSASGL) is disordered. Phosphoserine is present on residues Ser654, Ser664, and Ser723. 4 TPR repeats span residues 978–1011 (AFHF…FNNV), 1020–1053 (CACL…SERV), 1104–1137 (ALLD…STKY), and 1146–1179 (ALSH…YKTQ). The segment covering 1264 to 1278 (HQLQEASRNRDRAEE) has biased composition (basic and acidic residues). The disordered stretch occupies residues 1264-1309 (HQLQEASRNRDRAEEPMATEPAPAGAPGDLGSQPPAAKDPSPSVQG). Over residues 1279–1290 (PMATEPAPAGAP) the composition is skewed to low complexity.

This sequence belongs to the CLU family.

The protein resides in the cytoplasm. Its subcellular location is the cytoplasmic granule. MRNA-binding protein involved in proper cytoplasmic distribution of mitochondria. Specifically binds mRNAs of nuclear-encoded mitochondrial proteins in the cytoplasm and regulates transport or translation of these transcripts close to mitochondria, playing a role in mitochondrial biogenesis. This is Clustered mitochondria protein homolog (CLUH) from Homo sapiens (Human).